We begin with the raw amino-acid sequence, 333 residues long: MLLLPLLLLGVILPGGDNEDVFQGPTSFHLKQISTFVNSTWAQNLGSGWLDDLQIHGWESDSGTAIFLKPWSKGNFSDEEITELVDLFRVYLIGFIREVQDRVNEFQLEYPFVIQVIEGCELHSGEAIESSLRGALGGLDVLRIQNHSCMPAPDSGNRGQKLCALLSQYQGTSDIIERLVSETCPRYLLGVLDAGKAELQRQVKPEAWLSSGPTPGPGRLLLVCHVSGFYPKPVQVIWMRGKQEQPGTQQGDIMPNADWTWYLRVTLNVAAGEAAGLSCRVKHSSLGDQDIILYWGHPTSIGLILVAIIVPSLILSICLALWFWRRWSYQNIL.

The signal sequence occupies residues 1–20 (MLLLPLLLLGVILPGGDNED). The Extracellular segment spans residues 21-302 (VFQGPTSFHL…LYWGHPTSIG (282 aa)). 3 N-linked (GlcNAc...) asparagine glycosylation sites follow: Asn38, Asn75, and Asn146. Cystine bridges form between Cys120–Cys184, Cys149–Cys163, and Cys224–Cys279. Residues 185–295 (PRYLLGVLDA…LGDQDIILYW (111 aa)) enclose the Ig-like domain. The helical transmembrane segment at 303–323 (LILVAIIVPSLILSICLALWF) threads the bilayer. The Cytoplasmic segment spans residues 324-333 (WRRWSYQNIL). The Internalization signal motif lies at 329–332 (YQNI).

Heterodimer with B2M (beta-2-microglobulin). Interacts with saposin C.

The protein localises to the cell membrane. Its subcellular location is the endosome membrane. It is found in the lysosome membrane. Antigen-presenting protein that binds self and non-self lipid and glycolipid antigens and presents them to T-cell receptors on natural killer T-cells. In Ovis aries (Sheep), this protein is T-cell surface glycoprotein CD1b-2.